The primary structure comprises 251 residues: UPF0309 protein SAV_3856 (251 aa).

The SIS domain occupies 36 to 220; sequence IADTVADGGR…AGTLADRGIE (185 aa).

Belongs to the UPF0309 family.

This is UPF0309 protein SAV_3856 from Streptomyces avermitilis (strain ATCC 31267 / DSM 46492 / JCM 5070 / NBRC 14893 / NCIMB 12804 / NRRL 8165 / MA-4680).